A 424-amino-acid polypeptide reads, in one-letter code: UDP-N-acetylglucosamine 1-carboxyvinyltransferase (424 aa).

22–23 provides a ligand contact to phosphoenolpyruvate; sequence KN. A UDP-N-acetyl-alpha-D-glucosamine-binding site is contributed by R93. C117 functions as the Proton donor in the catalytic mechanism. A 2-(S-cysteinyl)pyruvic acid O-phosphothioketal modification is found at C117. Residues 162 to 165, D307, and I329 contribute to the UDP-N-acetyl-alpha-D-glucosamine site; that span reads KVSV.

It belongs to the EPSP synthase family. MurA subfamily.

It is found in the cytoplasm. The enzyme catalyses phosphoenolpyruvate + UDP-N-acetyl-alpha-D-glucosamine = UDP-N-acetyl-3-O-(1-carboxyvinyl)-alpha-D-glucosamine + phosphate. Its pathway is cell wall biogenesis; peptidoglycan biosynthesis. Its function is as follows. Cell wall formation. Adds enolpyruvyl to UDP-N-acetylglucosamine. The chain is UDP-N-acetylglucosamine 1-carboxyvinyltransferase from Actinobacillus pleuropneumoniae serotype 5b (strain L20).